Consider the following 356-residue polypeptide: Transcription factor ATOH1 (356 aa).

Basic and acidic residues predominate over residues 1–21; that stretch reads MSRLLHAEEWAEVKELGDHHR. Disordered regions lie at residues 1 to 56 and 92 to 125; these read MSRL…PELS and SEAA…GPVK. Positions 26 to 40 are enriched in pro residues; it reads HHLPQPPPPPPPQPP. Residues 96 to 109 are compositionally biased toward basic and acidic residues; that stretch reads APRDEVDGRGELVR. The segment covering 110–124 has biased composition (low complexity); it reads RSSGGASSSKSPGPV. The region spanning 161 to 213 is the bHLH domain; it reads QRRLAANARERRRMHGLNHAFDQLRNVIPSFNNDKKLSKYETLQMAQIYINAL. 2 disordered regions span residues 218–279 and 314–356; these read QTPS…TRFS and SPSL…DEAS. Residues 252-266 are compositionally biased toward low complexity; it reads NATAAGAQQASGGSQ. Basic and acidic residues predominate over residues 337–356; sequence HRSDGEFSPHSHYSDSDEAS.

As to quaternary structure, efficient DNA binding requires dimerization with another bHLH protein.

It localises to the nucleus. Functionally, transcriptional regulator. Activates E box-dependent transcription in collaboration with TCF3/E47, but the activity is completely antagonized by the negative regulator of neurogenesis HES1. Plays a role in the differentiation of subsets of neural cells by activating E box-dependent transcription. The sequence is that of Transcription factor ATOH1 from Pan troglodytes (Chimpanzee).